A 1039-amino-acid polypeptide reads, in one-letter code: Probable inorganic carbon transporter subunit DabA 2 (1039 aa).

The Zn(2+) site is built by C462, D464, H721, and C736.

This sequence belongs to the inorganic carbon transporter (TC 9.A.2) DabA family. Forms a complex with DabB. It depends on Zn(2+) as a cofactor.

The protein localises to the cell inner membrane. Part of an energy-coupled inorganic carbon pump. The chain is Probable inorganic carbon transporter subunit DabA 2 from Nitrobacter hamburgensis (strain DSM 10229 / NCIMB 13809 / X14).